The following is a 718-amino-acid chain: Sodium/myo-inositol cotransporter (718 aa).

At 1 to 9 (MRAVLDTAD) the chain is on the extracellular side. The chain crosses the membrane as a helical span at residues 10-29 (IAIVALYFILVMCIGFFAMW). The Cytoplasmic segment spans residues 30-38 (KSNRSTVSG). The helical transmembrane segment at 39-57 (YFLAGRSMTWVAIGASLFV) threads the bilayer. The Extracellular segment spans residues 58-86 (SNIGSEHFIGLAGSGAASGFAVGAWEFNA). A helical transmembrane segment spans residues 87–110 (LLLLQLLGWVFIPIYIRSGVYTMP). Residues 111–123 (EYLSKRFGGHRIQ) lie on the Cytoplasmic side of the membrane. Residues 124–144 (VYFAALSLILYIFTKLSVDLY) form a helical membrane-spanning segment. Over 145-157 (SGALFIQESLGWN) the chain is Extracellular. Residues 158–183 (LYVSVILLIGMTALLTVTGGLVAVIY) form a helical membrane-spanning segment. The Cytoplasmic portion of the chain corresponds to 184-186 (TDT). A helical membrane pass occupies residues 187–205 (LQALLMIIGALTLMIISIM). The Extracellular segment spans residues 206-303 (EIGGFEEVKR…HAKGSTLMAG (98 aa)). The N-linked (GlcNAc...) asparagine glycan is linked to Asn-232. A helical membrane pass occupies residues 304 to 324 (FLKLLPMFIIVVPGMISRILF). Over 325–353 (TDDIACINPEHCMLVCGSRAGCSNIAYPR) the chain is Cytoplasmic. The chain crosses the membrane as a helical span at residues 354–376 (LVMKLVPVGLRGLMMAVMIAALM). The Extracellular portion of the chain corresponds to 377–406 (SDLDSIFNSASTIFTLDVYKLIRKSASSRE). Residues 407 to 430 (LMIVGRIFVAFMVVISIAWVPIIV) traverse the membrane as a helical segment. Over 431–443 (EMQGGQMYLYIQE) the chain is Cytoplasmic. Residues 444 to 462 (VADYLTPPVAALFLLAIFW) traverse the membrane as a helical segment. The Extracellular segment spans residues 463–510 (KRCNEQGAFYGGMAGFVLGAVRLILAFAYRAPECDQPDNRPGFIKDIH). A helical transmembrane segment spans residues 511–532 (YMYVATGLFWVTGLITVIVSLL). The Cytoplasmic portion of the chain corresponds to 533–695 (TPPPTKEQIR…QMLEETRQVK (163 aa)). 2 positions are modified to phosphoserine: Ser-594 and Ser-632. Residues 696–716 (VILNIGLFAVCSLGIFMFVYF) form a helical membrane-spanning segment. Residues 717–718 (SL) are Extracellular-facing.

Belongs to the sodium:solute symporter (SSF) (TC 2.A.21) family. Interacts with KCNQ2 (via the pore module). Interacts with KCNQ1; this interaction is direct. Forms coregulatory complexes with ion channels KCNQ2-KCNQ3 and KCNQ1-KCNE2.

The protein resides in the apical cell membrane. The protein localises to the basolateral cell membrane. The catalysed reaction is myo-inositol(out) + 2 Na(+)(out) = myo-inositol(in) + 2 Na(+)(in). It carries out the reaction scyllo-inositol(out) + 2 Na(+)(out) = scyllo-inositol(in) + 2 Na(+)(in). Functionally, electrogenic Na(+)-coupled sugar symporter that actively transports myo-inositol and its stereoisomer scyllo-inositol across the plasma membrane, with a Na(+) to sugar coupling ratio of 2:1. Maintains myo-inositol concentration gradient that defines cell volume and fluid balance during osmotic stress, in particular in the fetoplacental unit and central nervous system. Forms coregulatory complexes with voltage-gated K(+) ion channels, allosterically altering ion selectivity, voltage dependence and gating kinetics of the channel. In turn, K(+) efflux through the channel forms a local electrical gradient that modulates electrogenic Na(+)-coupled myo-inositol influx through the transporter. Associates with KCNQ1-KCNE2 channel in the apical membrane of choroid plexus epithelium and regulates the myo-inositol gradient between blood and cerebrospinal fluid with an impact on neuron excitability. Associates with KCNQ2-KCNQ3 channel altering ion selectivity, increasing Na(+) and Cs(+) permeation relative to K(+) permeation. Provides myo-inositol precursor for biosynthesis of phosphoinositides such as PI(4,5)P2, thus indirectly affecting the activity of phosphoinositide-dependent ion channels and Ca(2+) signaling upon osmotic stress. The chain is Sodium/myo-inositol cotransporter from Homo sapiens (Human).